The sequence spans 144 residues: Small ribosomal subunit protein eS19 (144 aa).

Belongs to the eukaryotic ribosomal protein eS19 family.

This chain is Small ribosomal subunit protein eS19 (RPS19), found in Argopecten irradians (Bay scallop).